We begin with the raw amino-acid sequence, 105 residues long: Putative toxin MazF8 (105 aa).

As to quaternary structure, forms a complex with cognate antitoxin MazE8.

Functionally, putative toxic component of a type II toxin-antitoxin (TA) system. Acts as an endoribonuclease. Neutralized by coexpression with cognate antitoxin MazE8. This is Putative toxin MazF8 (mazF8) from Mycobacterium tuberculosis (strain CDC 1551 / Oshkosh).